We begin with the raw amino-acid sequence, 261 residues long: Cytochrome c oxidase subunit 2 (261 aa).

Residues Met1 to Gln34 lie on the Mitochondrial intermembrane side of the membrane. The helical transmembrane segment at Gly35–Ser55 threads the bilayer. Residues Arg56–Thr87 are Mitochondrial matrix-facing. A helical membrane pass occupies residues Ile88–Met108. The Mitochondrial intermembrane segment spans residues Asp109 to Ala261. Residues His188, Cys223, Glu225, Cys227, and His231 each coordinate Cu cation. Glu225 provides a ligand contact to Mg(2+).

It belongs to the cytochrome c oxidase subunit 2 family. As to quaternary structure, component of the cytochrome c oxidase (complex IV, CIV), a multisubunit enzyme composed of a catalytic core of 3 subunits and several supernumerary subunits. The complex exists as a monomer or a dimer and forms supercomplexes (SCs) in the inner mitochondrial membrane with ubiquinol-cytochrome c oxidoreductase (cytochrome b-c1 complex, complex III, CIII). The cofactor is Cu cation.

The protein resides in the mitochondrion inner membrane. The catalysed reaction is 4 Fe(II)-[cytochrome c] + O2 + 8 H(+)(in) = 4 Fe(III)-[cytochrome c] + 2 H2O + 4 H(+)(out). Its function is as follows. Component of the cytochrome c oxidase, the last enzyme in the mitochondrial electron transport chain which drives oxidative phosphorylation. The respiratory chain contains 3 multisubunit complexes succinate dehydrogenase (complex II, CII), ubiquinol-cytochrome c oxidoreductase (cytochrome b-c1 complex, complex III, CIII) and cytochrome c oxidase (complex IV, CIV), that cooperate to transfer electrons derived from NADH and succinate to molecular oxygen, creating an electrochemical gradient over the inner membrane that drives transmembrane transport and the ATP synthase. Cytochrome c oxidase is the component of the respiratory chain that catalyzes the reduction of oxygen to water. Electrons originating from reduced cytochrome c in the intermembrane space (IMS) are transferred via the dinuclear copper A center (CU(A)) of subunit 2 and heme A of subunit 1 to the active site in subunit 1, a binuclear center (BNC) formed by heme A3 and copper B (CU(B)). The BNC reduces molecular oxygen to 2 water molecules using 4 electrons from cytochrome c in the IMS and 4 protons from the mitochondrial matrix. This Daucus carota (Wild carrot) protein is Cytochrome c oxidase subunit 2 (COX2).